Reading from the N-terminus, the 228-residue chain is ATP-dependent dethiobiotin synthetase BioD 1 (228 aa).

Residue 13 to 18 (EVGKTV) participates in ATP binding. Threonine 17 is a binding site for Mg(2+). Residue lysine 38 is part of the active site. Residue serine 42 coordinates substrate. ATP is bound by residues aspartate 55, 116–119 (EGAG), 176–177 (ND), and 205–207 (PWL). The Mg(2+) site is built by aspartate 55 and glutamate 116.

It belongs to the dethiobiotin synthetase family. Homodimer. The cofactor is Mg(2+).

The protein localises to the cytoplasm. It catalyses the reaction (7R,8S)-7,8-diammoniononanoate + CO2 + ATP = (4R,5S)-dethiobiotin + ADP + phosphate + 3 H(+). Its pathway is cofactor biosynthesis; biotin biosynthesis; biotin from 7,8-diaminononanoate: step 1/2. Catalyzes a mechanistically unusual reaction, the ATP-dependent insertion of CO2 between the N7 and N8 nitrogen atoms of 7,8-diaminopelargonic acid (DAPA, also called 7,8-diammoniononanoate) to form a ureido ring. In Salmonella typhi, this protein is ATP-dependent dethiobiotin synthetase BioD 1.